A 238-amino-acid chain; its full sequence is Phosphatidylcholine synthase (238 aa).

Residues 1–16 (MPVNLSMTPINKAKAW) lie on the Cytoplasmic side of the membrane. A helical membrane pass occupies residues 17-37 (GVHAVTASGVILALLALLALV). Topologically, residues 38–41 (DNKP) are periplasmic. The helical transmembrane segment at 42–62 (QACLLWLGLALLVDGLDGTLA) threads the bilayer. Residues 63 to 75 (RKYEVKEMLPHFD) lie on the Cytoplasmic side of the membrane. Residues 76–96 (GSVLDLVIDYLTYVFIPAIFI) form a helical membrane-spanning segment. Topologically, residues 97 to 104 (YRYIPLPE) are periplasmic. A helical transmembrane segment spans residues 105–125 (HFELLAVGVILVSSLFCFCNV). The Cytoplasmic portion of the chain corresponds to 126 to 132 (NMKSTDN). Residues 133–153 (YFVGFPAAWNVVAVYFYVLDL) traverse the membrane as a helical segment. Over 154–155 (HP) the chain is Periplasmic. Residues 156 to 176 (WVNLATVLVLAALTLTRMKFL) traverse the membrane as a helical segment. The Cytoplasmic portion of the chain corresponds to 177 to 183 (HPFRVRQ). The helical transmembrane segment at 184–204 (FMPLNIAVTFVWLISSGLLIV) threads the bilayer. The Periplasmic segment spans residues 205 to 209 (QQPAD). A helical membrane pass occupies residues 210–230 (LPILLGLWFAASAYFVGICLW). Residues 231–238 (RSAREWFG) are Cytoplasmic-facing.

The protein belongs to the CDP-alcohol phosphatidyltransferase class-I family. Mn(2+) is required as a cofactor.

It is found in the cell inner membrane. It carries out the reaction a CDP-1,2-diacyl-sn-glycerol + choline = a 1,2-diacyl-sn-glycero-3-phosphocholine + CMP + H(+). Condenses choline with CDP-diglyceride to produce phosphatidylcholine and CMP. This chain is Phosphatidylcholine synthase, found in Pseudomonas aeruginosa (strain ATCC 15692 / DSM 22644 / CIP 104116 / JCM 14847 / LMG 12228 / 1C / PRS 101 / PAO1).